Here is an 862-residue protein sequence, read N- to C-terminus: Pentatricopeptide repeat-containing protein At1g74850, chloroplastic (862 aa).

Residues Met-1 to Ser-66 constitute a chloroplast transit peptide. PPR repeat units lie at residues Ser-104–Pro-139, Asn-140–Arg-174, Ser-175–Pro-209, Ser-210–Pro-245, Asp-246–Pro-280, Asp-281–Pro-315, Asp-316–Pro-350, Asn-351–Pro-385, Asp-386–Pro-420, Asp-421–Pro-455, Ser-456–Pro-490, Ser-491–Arg-525, Asn-526–Pro-560, Asp-561–Pro-595, and Ser-596–Asn-630. A Smr domain is found at Val-713 to Lys-801. The segment at Gly-831–Ala-862 is disordered. Positions Arg-833–Gln-848 are enriched in polar residues.

This sequence belongs to the PPR family. P subfamily. As to expression, mostly expressed in leaves, stems and flowers, but barely in roots.

It localises to the plastid. The protein localises to the chloroplast. In terms of biological role, involved in plastid gene expression. In Arabidopsis thaliana (Mouse-ear cress), this protein is Pentatricopeptide repeat-containing protein At1g74850, chloroplastic (PTAC2).